Here is a 487-residue protein sequence, read N- to C-terminus: Glycogen synthase (487 aa).

Lysine 20 contributes to the ADP-alpha-D-glucose binding site.

It belongs to the glycosyltransferase 1 family. Bacterial/plant glycogen synthase subfamily.

It carries out the reaction [(1-&gt;4)-alpha-D-glucosyl](n) + ADP-alpha-D-glucose = [(1-&gt;4)-alpha-D-glucosyl](n+1) + ADP + H(+). The protein operates within glycan biosynthesis; glycogen biosynthesis. Functionally, synthesizes alpha-1,4-glucan chains using ADP-glucose. In Aliivibrio fischeri (strain MJ11) (Vibrio fischeri), this protein is Glycogen synthase.